The following is a 149-amino-acid chain: Large ribosomal subunit protein uL15 (149 aa).

Composition is skewed to basic residues over residues 1–14 and 21–30; these read MPSR…HRGH and RIGKHRKHPG. Residues 1–39 are disordered; it reads MPSRFTKTRKHRGHVSAGKGRIGKHRKHPGGRGMAGGQH. 2 short sequence motifs (nuclear localization signal) span residues 7-13 and 24-30; these read KTRKHRG and KHRKHPG. A Glycyl lysine isopeptide (Lys-Gly) (interchain with G-Cter in ubiquitin) cross-link involves residue Lys96.

It belongs to the universal ribosomal protein uL15 family. In terms of assembly, component of the large ribosomal subunit (LSU). Mature yeast ribosomes consist of a small (40S) and a large (60S) subunit. The 40S small subunit contains 1 molecule of ribosomal RNA (18S rRNA) and 33 different proteins (encoded by 57 genes). The large 60S subunit contains 3 rRNA molecules (25S, 5.8S and 5S rRNA) and 46 different proteins (encoded by 81 genes).

It localises to the cytoplasm. In terms of biological role, component of the ribosome, a large ribonucleoprotein complex responsible for the synthesis of proteins in the cell. The small ribosomal subunit (SSU) binds messenger RNAs (mRNAs) and translates the encoded message by selecting cognate aminoacyl-transfer RNA (tRNA) molecules. The large subunit (LSU) contains the ribosomal catalytic site termed the peptidyl transferase center (PTC), which catalyzes the formation of peptide bonds, thereby polymerizing the amino acids delivered by tRNAs into a polypeptide chain. The nascent polypeptides leave the ribosome through a tunnel in the LSU and interact with protein factors that function in enzymatic processing, targeting, and the membrane insertion of nascent chains at the exit of the ribosomal tunnel. This Saccharomyces cerevisiae (strain ATCC 204508 / S288c) (Baker's yeast) protein is Large ribosomal subunit protein uL15.